The chain runs to 760 residues: Pentatricopeptide repeat-containing protein At1g20230 (760 aa).

PPR repeat units lie at residues D49–P79, T80–P114, D115–M149, D150–K180, D181–A215, N216–P250, D251–K285, D286–M316, E317–L351, N352–P386, N387–D421, N422–K452, N453–P487, D488–P523, and R524–E554. The interval V559–K634 is type E motif. The interval N635 to R665 is type E(+) motif. Positions K666–W760 are type DYW motif.

The protein belongs to the PPR family. PCMP-H subfamily.

The protein is Pentatricopeptide repeat-containing protein At1g20230 (PCMP-H21) of Arabidopsis thaliana (Mouse-ear cress).